The chain runs to 279 residues: Vacuolar iron transporter cccA (279 aa).

The tract at residues 1-44 is disordered; that stretch reads MLGGRHSHWSPQDLEEQAFSPYGTFPPSPTESTETSSSISSTRP. The segment covering 30–44 has biased composition (low complexity); that stretch reads TESTETSSSISSTRP. Helical transmembrane passes span 55 to 75, 80 to 100, 185 to 205, 208 to 228, and 243 to 263; these read ILGLSDGLTVPFALSAGLSAL, VVVVGGLAELVAGAISMGLGG, ITLALGYFIGGFIPLIPYFMV, VLVALYYSIGIMIFTLLVFGY, and IVAGIKGGLQMVVVGGLAAGA.

It belongs to the CCC1 family.

Its subcellular location is the vacuole membrane. It carries out the reaction Fe(2+)(in) = Fe(2+)(out). Functionally, vacuolar iron transporter involved in the transfer of iron from the cytosol to the vacuole for intracellular iron storage. Plays an essential role in iron detoxification during high iron conditions. This is Vacuolar iron transporter cccA from Arthroderma benhamiae (strain ATCC MYA-4681 / CBS 112371) (Trichophyton mentagrophytes).